A 674-amino-acid polypeptide reads, in one-letter code: Sodium/myo-inositol cotransporter 2 (674 aa).

The Extracellular segment spans residues 1–27 (MESSPSSPQPTQSDPLAVFPQRTLEPA). Residues 28-48 (DIAVLVLYFLFVLAVGLWSTV) traverse the membrane as a helical segment. The Cytoplasmic portion of the chain corresponds to 49–56 (KTRRDTVK). The helical transmembrane segment at 57–77 (GYFLAGGDMVWWPVGASLFAS) threads the bilayer. Residues 78–102 (NVGSGHFVGLAGSGAAAGLSVTAYE) are Extracellular-facing. A helical transmembrane segment spans residues 103-123 (FNGIFSVLMLAWIFLPIYIAG). Over 124-140 (QVTTMPEYLRKRFGGSR) the chain is Cytoplasmic. The helical transmembrane segment at 141-161 (IPITLAVLYLFIYIFTKISVD) threads the bilayer. Residues 162–180 (MYAGAIFIQQSLHLNLYLA) lie on the Extracellular side of the membrane. The chain crosses the membrane as a helical span at residues 181–201 (IVGLLAITALYTIAGGLAAVI). The Cytoplasmic segment spans residues 202–208 (YTDALQT). The chain crosses the membrane as a helical span at residues 209 to 229 (LIMLIGALTLMGYSFAAVGGM). The Extracellular portion of the chain corresponds to 230 to 272 (EGLKEKYFLALASNRSGNSSCGLPREDAFHIFRDPLTSDLPWP). A helical transmembrane segment spans residues 273 to 293 (GILFGMSIPSLWYWCTDQVIV). At 294–308 (QRTLAAKNLSHAKGG) the chain is on the cytoplasmic side. The helical transmembrane segment at 309-329 (SLMAAYLKVLPLFIMVFPGMV) threads the bilayer. At 330-374 (SRVLFPDQVACADPEICQKVCSNPAGCSDIAYPKLVLELLPMGLR) the chain is on the extracellular side. The chain crosses the membrane as a helical span at residues 375–397 (GLMMAVMVAALMSSLTSIFNSAS). The Cytoplasmic segment spans residues 398 to 418 (TIFTMDLWNHLRPRASERELM). Residues 419–439 (IVGRVFVLLLVLVSILWIPVV) form a helical membrane-spanning segment. Over 440–446 (QASQGGQ) the chain is Extracellular. Residues 447-467 (LFIYIQSISSYLQPPVAVVFI) traverse the membrane as a helical segment. Over 468-479 (MGCFWKRTNEKG) the chain is Cytoplasmic. The helical transmembrane segment at 480–500 (AFSGLILGLLLGLVRLVLDFI) threads the bilayer. Over 501-518 (YPQPRCDQPDERPAVVRD) the chain is Extracellular. A helical membrane pass occupies residues 519–539 (VHYLYFSMILSSVTLVTVSTV). Residues 540 to 653 (SWCTAPPTQE…SLEEIPLVKT (114 aa)) lie on the Cytoplasmic side of the membrane. Residues 654–674 (LLDINLIVCISCAIFLWGYFA) traverse the membrane as a helical segment.

The protein belongs to the sodium:solute symporter (SSF) (TC 2.A.21) family.

It is found in the membrane. It localises to the apical cell membrane. The catalysed reaction is myo-inositol(out) + 2 Na(+)(out) = myo-inositol(in) + 2 Na(+)(in). The enzyme catalyses 1D-chiro-inositol(out) + 2 Na(+)(out) = 1D-chiro-inositol(in) + 2 Na(+)(in). It carries out the reaction D-glucose(out) + 2 Na(+)(out) = D-glucose(in) + 2 Na(+)(in). It catalyses the reaction D-xylose(out) + 2 Na(+)(out) = D-xylose(in) + 2 Na(+)(in). MI transport activity inhibited by D-chiro-inositol (DCI), phlorizin (Pz) and sodium (Na(+)). Insulin increases D-chiro-inositol uptake. Its function is as follows. Involved in the sodium-dependent cotransport of myo-inositol (MI) with a Na(+):MI stoichiometry of 2:1. Exclusively responsible for apical MI transport and absorption in intestine. Can also transport D-chiro-inositol (DCI) but not L-fucose. Exhibits stereospecific cotransport of both D-glucose and D-xylose. May induce apoptosis through the TNF-alpha, PDCD1 pathway. May play a role in the regulation of MI concentration in serum, involving reabsorption in at least the proximal tubule of the kidney. This Sus scrofa (Pig) protein is Sodium/myo-inositol cotransporter 2.